The chain runs to 221 residues: Proteasome subunit beta type-1 (221 aa).

It belongs to the peptidase T1B family. In terms of assembly, the 26S proteasome consists of a 20S proteasome core and two 19S regulatory subunits. The 20S proteasome core is composed of 28 subunits that are arranged in four stacked rings, resulting in a barrel-shaped structure. The two end rings are each formed by seven alpha subunits, and the two central rings are each formed by seven beta subunits. The catalytic chamber with the active sites is on the inside of the barrel.

The protein resides in the cytoplasm. It localises to the nucleus. Non-catalytic component of the proteasome, a multicatalytic proteinase complex which is characterized by its ability to cleave peptides with Arg, Phe, Tyr, Leu, and Glu adjacent to the leaving group at neutral or slightly basic pH. The proteasome has an ATP-dependent proteolytic activity. This Oryza sativa subsp. japonica (Rice) protein is Proteasome subunit beta type-1 (PBF1).